A 566-amino-acid chain; its full sequence is Endoglucanase B (566 aa).

The first 30 residues, 1–30 (MKKRRSSKVILSLAIVVALLAAVEPNAALA), serve as a signal peptide directing secretion. Glutamate 177 functions as the Proton donor in the catalytic mechanism. The active-site Nucleophile is the glutamate 299.

Belongs to the glycosyl hydrolase 5 (cellulase A) family.

The enzyme catalyses Endohydrolysis of (1-&gt;4)-beta-D-glucosidic linkages in cellulose, lichenin and cereal beta-D-glucans.. This is Endoglucanase B (celB) from Paenibacillus lautus (Bacillus lautus).